We begin with the raw amino-acid sequence, 380 residues long: Cytochrome b (380 aa).

Transmembrane regions (helical) follow at residues 33–53 (FGSLLGICLMVQIITGLFLAM), 77–98 (WLIRYMHANGASMFFICLFIHV), 113–133 (WNIGIALFLTTMATAFVGYVL), and 178–198 (FFAFHFILPFIITAFVLVHLL). 2 residues coordinate heme b: His83 and His97. Heme b-binding residues include His182 and His196. His201 serves as a coordination point for a ubiquinone. The next 4 helical transmembrane spans lie at 226 to 246 (IKDILGILMLLMVLMILVLFF), 288 to 308 (LGGVTALILSILILAMFPLIN), 320 to 340 (ITQAMYWIFIANLFILTWIGG), and 347 to 367 (FTMIGLISSILYFSIIVMFMF).

The protein belongs to the cytochrome b family. As to quaternary structure, the cytochrome bc1 complex contains 11 subunits: 3 respiratory subunits (MT-CYB, CYC1 and UQCRFS1), 2 core proteins (UQCRC1 and UQCRC2) and 6 low-molecular weight proteins (UQCRH/QCR6, UQCRB/QCR7, UQCRQ/QCR8, UQCR10/QCR9, UQCR11/QCR10 and a cleavage product of UQCRFS1). This cytochrome bc1 complex then forms a dimer. It depends on heme b as a cofactor.

It localises to the mitochondrion inner membrane. Functionally, component of the ubiquinol-cytochrome c reductase complex (complex III or cytochrome b-c1 complex) that is part of the mitochondrial respiratory chain. The b-c1 complex mediates electron transfer from ubiquinol to cytochrome c. Contributes to the generation of a proton gradient across the mitochondrial membrane that is then used for ATP synthesis. The polypeptide is Cytochrome b (MT-CYB) (Calomys musculinus (Drylands vesper mouse)).